Here is a 256-residue protein sequence, read N- to C-terminus: Undecaprenyl-diphosphatase (256 aa).

A run of 8 helical transmembrane segments spans residues 1–21, 39–59, 70–90, 97–117, 134–154, 176–196, 205–225, and 235–255; these read MTIL…FLPI, NAIN…AVIF, IDLW…GFIF, LFSL…FLIV, AISL…LIPG, AEFS…YDLL, ANLI…YLSI, and FTFF…LLFF.

This sequence belongs to the UppP family.

Its subcellular location is the cell inner membrane. The catalysed reaction is di-trans,octa-cis-undecaprenyl diphosphate + H2O = di-trans,octa-cis-undecaprenyl phosphate + phosphate + H(+). In terms of biological role, catalyzes the dephosphorylation of undecaprenyl diphosphate (UPP). Confers resistance to bacitracin. The protein is Undecaprenyl-diphosphatase of Sulfurimonas denitrificans (strain ATCC 33889 / DSM 1251) (Thiomicrospira denitrificans (strain ATCC 33889 / DSM 1251)).